Here is an 84-residue protein sequence, read N- to C-terminus: Cytochrome b559 subunit alpha (84 aa).

A helical membrane pass occupies residues 22 to 36 (IIHSITIPALFVAGW). Histidine 24 is a binding site for heme.

The protein belongs to the PsbE/PsbF family. Heterodimer of an alpha subunit and a beta subunit. PSII is composed of 1 copy each of membrane proteins PsbA, PsbB, PsbC, PsbD, PsbE, PsbF, PsbH, PsbI, PsbJ, PsbK, PsbL, PsbM, PsbT, PsbX, PsbY, PsbZ, Psb30/Ycf12, at least 3 peripheral proteins of the oxygen-evolving complex and a large number of cofactors. It forms dimeric complexes. Requires heme b as cofactor.

It is found in the plastid. The protein resides in the chloroplast thylakoid membrane. In terms of biological role, this b-type cytochrome is tightly associated with the reaction center of photosystem II (PSII). PSII is a light-driven water:plastoquinone oxidoreductase that uses light energy to abstract electrons from H(2)O, generating O(2) and a proton gradient subsequently used for ATP formation. It consists of a core antenna complex that captures photons, and an electron transfer chain that converts photonic excitation into a charge separation. This chain is Cytochrome b559 subunit alpha, found in Guillardia theta (Cryptophyte).